Reading from the N-terminus, the 600-residue chain is Elongation factor 4 (600 aa).

The tr-type G domain occupies 6-188 (KLIRNFSIIA…AVVERIPAPK (183 aa)). GTP contacts are provided by residues 18-23 (DHGKST) and 135-138 (NKID).

Belongs to the TRAFAC class translation factor GTPase superfamily. Classic translation factor GTPase family. LepA subfamily.

It localises to the cell inner membrane. The catalysed reaction is GTP + H2O = GDP + phosphate + H(+). Its function is as follows. Required for accurate and efficient protein synthesis under certain stress conditions. May act as a fidelity factor of the translation reaction, by catalyzing a one-codon backward translocation of tRNAs on improperly translocated ribosomes. Back-translocation proceeds from a post-translocation (POST) complex to a pre-translocation (PRE) complex, thus giving elongation factor G a second chance to translocate the tRNAs correctly. Binds to ribosomes in a GTP-dependent manner. This Sorangium cellulosum (strain So ce56) (Polyangium cellulosum (strain So ce56)) protein is Elongation factor 4.